A 319-amino-acid polypeptide reads, in one-letter code: G-protein coupled receptor 171 (319 aa).

The Extracellular portion of the chain corresponds to 1–21 (MTNSSFFCPVYKDLEPFTYFF). N-linked (GlcNAc...) asparagine glycosylation is present at Asn3. Residues 22–42 (YLVFLVGIIGSCFATWAFIQK) form a helical membrane-spanning segment. Residues 43–48 (NTNHRC) lie on the Cytoplasmic side of the membrane. Residues 49 to 69 (VSIYLINLLTADFLLTLALPV) traverse the membrane as a helical segment. At 70–89 (KIVVDLGVAPWKLKIFHCQV) the chain is on the extracellular side. Residues 90 to 110 (TACLIYINMYLSIIFLAFVSI) form a helical membrane-spanning segment. The Cytoplasmic segment spans residues 111–132 (DRCLQLTHSCKIYRIQEPGFAK). The helical transmembrane segment at 133-153 (MISTVVWLMVLLIMVPNMMIP) threads the bilayer. Residues 154-181 (IKDIKEKSNVGCMEFKKEFGRNWHLLTN) are Extracellular-facing. A helical membrane pass occupies residues 182–202 (FICVAIFLNFSAIILISNCLV). Residues 203 to 224 (IRQLYRNKDNENYPNVKKALIN) lie on the Cytoplasmic side of the membrane. Residues 225–245 (ILLVTTGYIICFVPYHIVRIP) traverse the membrane as a helical segment. Residues 246–268 (YTLSQTEVITDCSTRISLFKAKE) lie on the Extracellular side of the membrane. A helical membrane pass occupies residues 269–289 (ATLLLAVSNLCFDPILYYHLS). Over 290-319 (KAFRSKVTETFASPKETKAQKEKLRCENNA) the chain is Cytoplasmic.

This sequence belongs to the G-protein coupled receptor 1 family. Expressed in both T-cell subsets and natural killer cells, while it is undetectable in B cells or CD14(+) monocytes. Expressed in peripheral blood mononuclear cells (PBMC) and Jurkat cells (at protein level).

The protein localises to the cell membrane. In terms of biological role, G-protein coupled receptor for Big LEN, a 16-amino acid neuropeptide produced from the precursor protein, proSAAS (encoded by PCSK1N). Acts through a G(i)-alpha-mediated pathway in response to Big LEN. Big LEN-GPR171 system plays an important role in regulating feeding and metabolism. Also plays a role in modulating fear and anxiety-like behaviors in the basolateral amygdala. Big LEN-GPR171 modulates the mu-type opioid receptor signaling and antinociception. Acts as a negative regulator T cell function. This chain is G-protein coupled receptor 171, found in Homo sapiens (Human).